Reading from the N-terminus, the 521-residue chain is MIKQALISVSDKTGIVDFAKALSALGVKLLSTGGTAKLLADAGLPVTEVADYTGFPEMLDGRVKTLHPKVHGGILARRDLPEHMQALEAHGIPTIDLLVVNLYPFVQTIAKDDCTLADAIENIDIGGPTMLRSAAKNHRDVTVVVDPADYAVVLDEMKANGNTLGYKTNFRLATKVFAHTAQYDGAITNYLTSLGDDLQHGSRSAYPATLNLAFDKVQDLRYGENPHQSAAFYRDVATPAGALANYRQLQGKELSYNNIADSDAAWECVKTFDAPACVIIKHANPCGVAVGADAGEAYAKAFQTDPTSAFGGIIAFNREVDEAAAQAVAKQFVEVLIAPSFSDAAKQVFAAKQNVRLLEIALGEGHNAFDLKRVGGGLLVQSLDSKNVQPRELRVVTKRHPTPKEMDDLLFAWRVAKYVKSNAIVFCGNGMTLGVGAGQMSRVDSARIASIKAQNAGLTLAGSAVASDAFFPFRDGLDVVVAAGATCVIQPGGSVRDDEVIAAADEHNIAMVVTGVRHFRH.

One can recognise an MGS-like domain in the interval 1-145 (MIKQALISVS…KNHRDVTVVV (145 aa)).

Belongs to the PurH family.

The enzyme catalyses (6R)-10-formyltetrahydrofolate + 5-amino-1-(5-phospho-beta-D-ribosyl)imidazole-4-carboxamide = 5-formamido-1-(5-phospho-D-ribosyl)imidazole-4-carboxamide + (6S)-5,6,7,8-tetrahydrofolate. The catalysed reaction is IMP + H2O = 5-formamido-1-(5-phospho-D-ribosyl)imidazole-4-carboxamide. Its pathway is purine metabolism; IMP biosynthesis via de novo pathway; 5-formamido-1-(5-phospho-D-ribosyl)imidazole-4-carboxamide from 5-amino-1-(5-phospho-D-ribosyl)imidazole-4-carboxamide (10-formyl THF route): step 1/1. It participates in purine metabolism; IMP biosynthesis via de novo pathway; IMP from 5-formamido-1-(5-phospho-D-ribosyl)imidazole-4-carboxamide: step 1/1. This Burkholderia pseudomallei (strain 1106a) protein is Bifunctional purine biosynthesis protein PurH.